Reading from the N-terminus, the 139-residue chain is Cytochrome c2 (139 aa).

An N-terminal signal peptide occupies residues 1-25 (MVKKLLTILSIAATAGSLSIGTASA). Glutamine 26 is subject to Pyrrolidone carboxylic acid. 4 residues coordinate heme c: cysteine 38, cysteine 41, histidine 42, and methionine 118.

The protein belongs to the cytochrome c family. Binds 1 heme c group covalently per subunit.

Cytochrome c2 is found mainly in purple, non-sulfur, photosynthetic bacteria where it functions as the electron donor to the oxidized bacteriochlorophyll in the photophosphorylation pathway. However, it may also have a role in the respiratory chain and is found in some non-photosynthetic bacteria. This chain is Cytochrome c2 (cycA), found in Rhodopseudomonas palustris (strain ATCC BAA-98 / CGA009).